Here is a 248-residue protein sequence, read N- to C-terminus: Deoxyribose-phosphate aldolase (248 aa).

The Proton donor/acceptor role is filled by Asp106. Lys168 acts as the Schiff-base intermediate with acetaldehyde in catalysis. Catalysis depends on Lys197, which acts as the Proton donor/acceptor.

It belongs to the DeoC/FbaB aldolase family. DeoC type 1 subfamily.

The protein localises to the cytoplasm. It carries out the reaction 2-deoxy-D-ribose 5-phosphate = D-glyceraldehyde 3-phosphate + acetaldehyde. Its pathway is carbohydrate degradation; 2-deoxy-D-ribose 1-phosphate degradation; D-glyceraldehyde 3-phosphate and acetaldehyde from 2-deoxy-alpha-D-ribose 1-phosphate: step 2/2. In terms of biological role, catalyzes a reversible aldol reaction between acetaldehyde and D-glyceraldehyde 3-phosphate to generate 2-deoxy-D-ribose 5-phosphate. The sequence is that of Deoxyribose-phosphate aldolase from Sinorhizobium medicae (strain WSM419) (Ensifer medicae).